The following is a 162-amino-acid chain: NADH-quinone oxidoreductase subunit I (162 aa).

4Fe-4S ferredoxin-type domains follow at residues 52-82 and 93-122; these read LRRY…IEAG and TRYD…EGPN. Positions 62, 65, 68, 72, 102, 105, 108, and 112 each coordinate [4Fe-4S] cluster.

This sequence belongs to the complex I 23 kDa subunit family. As to quaternary structure, NDH-1 is composed of 14 different subunits. Subunits NuoA, H, J, K, L, M, N constitute the membrane sector of the complex. The cofactor is [4Fe-4S] cluster.

It localises to the cell inner membrane. The enzyme catalyses a quinone + NADH + 5 H(+)(in) = a quinol + NAD(+) + 4 H(+)(out). NDH-1 shuttles electrons from NADH, via FMN and iron-sulfur (Fe-S) centers, to quinones in the respiratory chain. The immediate electron acceptor for the enzyme in this species is believed to be ubiquinone. Couples the redox reaction to proton translocation (for every two electrons transferred, four hydrogen ions are translocated across the cytoplasmic membrane), and thus conserves the redox energy in a proton gradient. This is NADH-quinone oxidoreductase subunit I from Methylobacterium sp. (strain 4-46).